The primary structure comprises 374 residues: Chaperone protein DnaJ (374 aa).

The J domain occupies aspartate 5–glycine 70. The CR-type zinc finger occupies glycine 129–glutamate 207. Cysteine 142, cysteine 145, cysteine 159, cysteine 162, cysteine 181, cysteine 184, cysteine 195, and cysteine 198 together coordinate Zn(2+). CXXCXGXG motif repeat units follow at residues cysteine 142–glycine 149, cysteine 159–glycine 166, cysteine 181–glycine 188, and cysteine 195–glycine 202. A disordered region spans residues proline 216–proline 238.

This sequence belongs to the DnaJ family. In terms of assembly, homodimer. Zn(2+) is required as a cofactor.

Its subcellular location is the cytoplasm. Functionally, participates actively in the response to hyperosmotic and heat shock by preventing the aggregation of stress-denatured proteins and by disaggregating proteins, also in an autonomous, DnaK-independent fashion. Unfolded proteins bind initially to DnaJ; upon interaction with the DnaJ-bound protein, DnaK hydrolyzes its bound ATP, resulting in the formation of a stable complex. GrpE releases ADP from DnaK; ATP binding to DnaK triggers the release of the substrate protein, thus completing the reaction cycle. Several rounds of ATP-dependent interactions between DnaJ, DnaK and GrpE are required for fully efficient folding. Also involved, together with DnaK and GrpE, in the DNA replication of plasmids through activation of initiation proteins. This chain is Chaperone protein DnaJ, found in Marinobacter nauticus (strain ATCC 700491 / DSM 11845 / VT8) (Marinobacter aquaeolei).